The chain runs to 337 residues: Putative carbonic anhydrase-like protein 2 (337 aa).

A signal peptide spans 1–16; sequence MIPWLLTACIYPCVIG. The region spanning 17 to 274 is the Alpha-carbonic anhydrase domain; it reads PDFWGLLHGD…LNGRLVRTNI (258 aa). The active site involves Tyr-140. Residue Asn-188 is glycosylated (N-linked (GlcNAc...) asparagine). A substrate-binding site is contributed by 212-213; the sequence is TF.

It belongs to the alpha-carbonic anhydrase family.

It is found in the secreted. This chain is Putative carbonic anhydrase-like protein 2 (cah-2), found in Caenorhabditis elegans.